The following is a 547-amino-acid chain: MAAKDVKFGNDARVKMLRGVNVLADAVKVTLGPKGRNVVLDKSFGAPAITKDGVSVAREIELEDKFENMGAQMVKEVASKANDAAGDGTTTATVLAQAIITEGLKAVAAGMNPMDLKRGIDKAVIAAVEELKTLSVPCSDSKAIAQVGTISANSDETVGKLIAEAMDKVGKEGVITVEDGTGLEDELDVVEGMQFDRGYLSPYFINKPETGAVELESPFILLADKKISNIREMLPVLEAVAKAGKPLLIIAEDVEGEALATLVVNTMRGIVKVAAVKAPGFGDRRKAMLQDIATLTGGTVISEEIGMELEKATLEDMGQAKRVIINKDTTTIIDGVGEEAAIQGRVGQIRKQIEEATSDYDREKLQERVAKLAGGVAVIKVGAATEVEMKEKKARVDDALHATRAAVEEGVVAGGGVALIRVASKLSELRGQNEDQNVGIKVALRAMEAPLRQIVLNCGEEPSVVANTVKAGDGNYGYNAATEEYGNMIDMGILDPTKVTRSALQYAASVAGLMITTECMITDVPKGDGPDLGAGGMGGMGGMGGMM.

ATP is bound by residues 30–33 (TLGP), Lys-51, 87–91 (DGTTT), Gly-415, 479–481 (NAA), and Asp-495.

The protein belongs to the chaperonin (HSP60) family. As to quaternary structure, forms a cylinder of 14 subunits composed of two heptameric rings stacked back-to-back. Interacts with the co-chaperonin GroES.

It is found in the cytoplasm. The enzyme catalyses ATP + H2O + a folded polypeptide = ADP + phosphate + an unfolded polypeptide.. In terms of biological role, together with its co-chaperonin GroES, plays an essential role in assisting protein folding. The GroEL-GroES system forms a nano-cage that allows encapsulation of the non-native substrate proteins and provides a physical environment optimized to promote and accelerate protein folding. The protein is Chaperonin GroEL of Enterobacter sp. (strain 638).